Reading from the N-terminus, the 236-residue chain is tRNA1(Val) (adenine(37)-N6)-methyltransferase (236 aa).

It belongs to the methyltransferase superfamily. tRNA (adenine-N(6)-)-methyltransferase family.

It localises to the cytoplasm. It carries out the reaction adenosine(37) in tRNA1(Val) + S-adenosyl-L-methionine = N(6)-methyladenosine(37) in tRNA1(Val) + S-adenosyl-L-homocysteine + H(+). Its function is as follows. Specifically methylates the adenine in position 37 of tRNA(1)(Val) (anticodon cmo5UAC). This chain is tRNA1(Val) (adenine(37)-N6)-methyltransferase, found in Actinobacillus pleuropneumoniae serotype 5b (strain L20).